The primary structure comprises 544 residues: Chaperonin GroEL (544 aa).

Residues 30–33 (TLGP), lysine 51, 87–91 (DGTTT), glycine 415, and aspartate 495 contribute to the ATP site.

It belongs to the chaperonin (HSP60) family. In terms of assembly, forms a cylinder of 14 subunits composed of two heptameric rings stacked back-to-back. Interacts with the co-chaperonin GroES.

The protein resides in the cytoplasm. The catalysed reaction is ATP + H2O + a folded polypeptide = ADP + phosphate + an unfolded polypeptide.. Functionally, together with its co-chaperonin GroES, plays an essential role in assisting protein folding. The GroEL-GroES system forms a nano-cage that allows encapsulation of the non-native substrate proteins and provides a physical environment optimized to promote and accelerate protein folding. The protein is Chaperonin GroEL of Neisseria flavescens.